Consider the following 145-residue polypeptide: MKIKIQKIHPNALIPKYQTEGSSGFDLHAVEEVVIKPHSVGLVRIGICLSLEVGYELQVRTRSGLALNHQVMVLNSPGTVDNDYRGEIKVILANLSDKDFKVQVGDRIAQGVVQKTYKAEFIECEQLDETSRGSGGFGSTGVSKA.

Substrate-binding positions include Arg62–Gly64, Asn75, Thr79–Asp81, and Lys89.

It belongs to the dUTPase family. Requires Mg(2+) as cofactor.

It catalyses the reaction dUTP + H2O = dUMP + diphosphate + H(+). It participates in pyrimidine metabolism; dUMP biosynthesis; dUMP from dCTP (dUTP route): step 2/2. This enzyme is involved in nucleotide metabolism: it produces dUMP, the immediate precursor of thymidine nucleotides and it decreases the intracellular concentration of dUTP so that uracil cannot be incorporated into DNA. This chain is Deoxyuridine 5'-triphosphate nucleotidohydrolase, found in Helicobacter pylori (strain J99 / ATCC 700824) (Campylobacter pylori J99).